Here is a 394-residue protein sequence, read N- to C-terminus: S-adenosylmethionine synthase 1 (394 aa).

Glu-11 serves as a coordination point for Mg(2+). His-17 serves as a coordination point for ATP. Glu-45 contacts K(+). Glu-58 and Gln-101 together coordinate L-methionine. Residues 169–171, 237–240, Asp-248, 254–255, Ala-271, Lys-275, and Lys-279 contribute to the ATP site; these read DGK, SGRF, and RK. Asp-248 serves as a coordination point for L-methionine. Residue Lys-279 coordinates L-methionine.

It belongs to the AdoMet synthase family. As to quaternary structure, homotetramer. The cofactor is Mn(2+). Mg(2+) is required as a cofactor. Requires Co(2+) as cofactor. It depends on K(+) as a cofactor.

It localises to the cytoplasm. It carries out the reaction L-methionine + ATP + H2O = S-adenosyl-L-methionine + phosphate + diphosphate. It functions in the pathway amino-acid biosynthesis; S-adenosyl-L-methionine biosynthesis; S-adenosyl-L-methionine from L-methionine: step 1/1. Its function is as follows. Catalyzes the formation of S-adenosylmethionine from methionine and ATP. The reaction comprises two steps that are both catalyzed by the same enzyme: formation of S-adenosylmethionine (AdoMet) and triphosphate, and subsequent hydrolysis of the triphosphate. This is S-adenosylmethionine synthase 1 (SAMS1) from Triticum monococcum (Einkorn wheat).